Reading from the N-terminus, the 192-residue chain is NADH-quinone oxidoreductase subunit C (192 aa).

Residues 170–192 (LGGIPVEYKGATVPPPDERRQYA) form a disordered region.

Belongs to the complex I 30 kDa subunit family. In terms of assembly, NDH-1 is composed of 14 different subunits. Subunits NuoB, C, D, E, F, and G constitute the peripheral sector of the complex.

It localises to the cell membrane. The catalysed reaction is a quinone + NADH + 5 H(+)(in) = a quinol + NAD(+) + 4 H(+)(out). Its function is as follows. NDH-1 shuttles electrons from NADH, via FMN and iron-sulfur (Fe-S) centers, to quinones in the respiratory chain. The immediate electron acceptor for the enzyme in this species is believed to be a menaquinone. Couples the redox reaction to proton translocation (for every two electrons transferred, four hydrogen ions are translocated across the cytoplasmic membrane), and thus conserves the redox energy in a proton gradient. The chain is NADH-quinone oxidoreductase subunit C from Acidothermus cellulolyticus (strain ATCC 43068 / DSM 8971 / 11B).